A 258-amino-acid polypeptide reads, in one-letter code: Isoprenyl transferase (258 aa).

The active site involves Asp-38. Asp-38 lines the Mg(2+) pocket. Residues Gly-39–Arg-42, Trp-43, Arg-51, His-55, and Ser-83–Glu-85 each bind substrate. Asn-86 acts as the Proton acceptor in catalysis. Substrate contacts are provided by residues Trp-87, Arg-89, Arg-206, and Arg-212–Ser-214. Glu-225 contributes to the Mg(2+) binding site.

It belongs to the UPP synthase family. As to quaternary structure, homodimer. Mg(2+) is required as a cofactor.

In terms of biological role, catalyzes the condensation of isopentenyl diphosphate (IPP) with allylic pyrophosphates generating different type of terpenoids. This chain is Isoprenyl transferase, found in Bacillus cereus (strain ATCC 14579 / DSM 31 / CCUG 7414 / JCM 2152 / NBRC 15305 / NCIMB 9373 / NCTC 2599 / NRRL B-3711).